We begin with the raw amino-acid sequence, 291 residues long: Protease HtpX homolog (291 aa).

The next 2 membrane-spanning stretches (helical) occupy residues V4–I24 and M38–L58. H144 provides a ligand contact to Zn(2+). The active site involves E145. H148 lines the Zn(2+) pocket. 2 helical membrane-spanning segments follow: residues L159–V179 and I199–F219. E224 serves as a coordination point for Zn(2+).

This sequence belongs to the peptidase M48B family. It depends on Zn(2+) as a cofactor.

It is found in the cell inner membrane. The sequence is that of Protease HtpX homolog from Pelodictyon phaeoclathratiforme (strain DSM 5477 / BU-1).